The following is a 151-amino-acid chain: MRTMGLDLGTKTIGVAVSDGLGLTAQGITTVRRTSLKADLAALATVASEHEVTHVVLGLPLNMDGSEGPRAEASRKFADTLAQSLGVTVELWDERLSTVAATRTLLEADVSRARRREVIDQVAAQFILQGWLDAHRPPDTDYHPDDYDSEP.

This sequence belongs to the YqgF nuclease family.

Its subcellular location is the cytoplasm. Functionally, could be a nuclease involved in processing of the 5'-end of pre-16S rRNA. In Myxococcus xanthus (strain DK1622), this protein is Putative pre-16S rRNA nuclease.